The primary structure comprises 311 residues: Probable manganese-dependent inorganic pyrophosphatase (311 aa).

Residues histidine 9, aspartate 13, aspartate 15, aspartate 77, histidine 99, and aspartate 151 each contribute to the Mn(2+) site.

The protein belongs to the PPase class C family. It depends on Mn(2+) as a cofactor.

It is found in the cytoplasm. The catalysed reaction is diphosphate + H2O = 2 phosphate + H(+). In Streptococcus sanguinis (strain SK36), this protein is Probable manganese-dependent inorganic pyrophosphatase.